Reading from the N-terminus, the 179-residue chain is Large ribosomal subunit protein uL5 (179 aa).

Belongs to the universal ribosomal protein uL5 family. As to quaternary structure, part of the 50S ribosomal subunit; part of the 5S rRNA/L5/L18/L25 subcomplex. Contacts the 5S rRNA and the P site tRNA. Forms a bridge to the 30S subunit in the 70S ribosome.

In terms of biological role, this is one of the proteins that bind and probably mediate the attachment of the 5S RNA into the large ribosomal subunit, where it forms part of the central protuberance. In the 70S ribosome it contacts protein S13 of the 30S subunit (bridge B1b), connecting the 2 subunits; this bridge is implicated in subunit movement. Contacts the P site tRNA; the 5S rRNA and some of its associated proteins might help stabilize positioning of ribosome-bound tRNAs. In Bacillus mycoides (strain KBAB4) (Bacillus weihenstephanensis), this protein is Large ribosomal subunit protein uL5.